The sequence spans 193 residues: Pilin-like protein PilA2 (193 aa).

Residues 1-4 (MRKG) constitute a propeptide, leader sequence. Leu5 carries the N-methylleucine modification. The chain crosses the membrane as a helical span at residues 5 to 25 (LTLVEVLVTLVIMGIAFAALL).

It localises to the cell inner membrane. The protein localises to the cell outer membrane. Its subcellular location is the periplasm. Its function is as follows. Plays an essential role in natural DNA transformation but is not required for pilus biogenesis. The protein is Pilin-like protein PilA2 (pilA2) of Thermus thermophilus (strain ATCC BAA-163 / DSM 7039 / HB27).